Reading from the N-terminus, the 731-residue chain is Nucleolar GTP-binding protein 2 (731 aa).

Residue Met1 is modified to N-acetylmethionine. The tract at residues Met1–Arg33 is disordered. Residues Ser10–Asp22 are compositionally biased toward polar residues. The CP-type G domain maps to Trp207–Pro368. GTP is bound by residues Gly317–Ser324 and Asp361–Val365. Residues Val481–Ser502 form a disordered region. Ser504 carries the post-translational modification Phosphoserine. Residues Leu555 to Val589 are compositionally biased toward acidic residues. Disordered stretches follow at residues Leu555–Lys594 and Glu630–Gln731. Basic and acidic residues-rich tracts occupy residues Glu630 to Pro652 and Gln662 to Asn671. Composition is skewed to basic residues over residues Glu681–Gly695 and Lys721–Gln731.

It belongs to the TRAFAC class YlqF/YawG GTPase family. NOG2 subfamily. Interacts with LYAR and RPL23A. Interacts with the nuclear importin-beta receptor and, at a lower extent, with importin-alpha. As to expression, widely expressed, with the highest expression level in testis.

The protein resides in the nucleus. It localises to the nucleolus. Functionally, GTPase that associates with pre-60S ribosomal subunits in the nucleolus and is required for their nuclear export and maturation. May promote cell proliferation possibly by increasing p53/TP53 protein levels, and consequently those of its downstream product CDKN1A/p21, and decreasing RPL23A protein levels. In Homo sapiens (Human), this protein is Nucleolar GTP-binding protein 2 (GNL2).